The following is a 619-amino-acid chain: Calnexin (619 aa).

The N-terminal stretch at 1 to 21 is a signal peptide; the sequence is MVNRKWMYIFIQFLLVSSIRS. Asp109 is a binding site for Ca(2+). Cys152 and Cys186 are disulfide-bonded. 4 residues coordinate an alpha-D-glucoside: Tyr156, Lys158, Tyr177, and Asp184. An N-linked (GlcNAc...) asparagine glycan is attached at Asn203. A p domain (Extended arm) region spans residues 268 to 401; it reads IFDETDLKPV…RLIDNPNYFE (134 aa). A run of 5 repeats spans residues 270–282, 287–299, 306–318, 325–337, and 340–350. 4 X approximate repeats regions lie at residues 270 to 337 and 340 to 397; these read DETD…WDED and GSWE…IDNP. The cysteines at positions 352 and 358 are disulfide-linked. Repeat copies occupy residues 359 to 369, 373 to 383, and 387 to 397. Glu417 is a binding site for an alpha-D-glucoside. Asp428 is a Ca(2+) binding site. A helical transmembrane segment spans residues 481–501; sequence LWAVYILCVLLPLVAIGVFCF. The segment at 538 to 619 is disordered; it reads GDEEDDVNQP…AKRRTARRGD (82 aa). Polar residues predominate over residues 547–557; sequence PGPSGSQSNPE. A compositionally biased stretch (low complexity) spans 566 to 577; sequence EQQSANSSQSSA. Residue Asn571 is glycosylated (N-linked (GlcNAc...) asparagine). Positions 585–601 are enriched in basic and acidic residues; sequence HVVPENEPVKPTEEFAK. The segment covering 610 to 619 has biased composition (basic residues); it reads AKRRTARRGD.

The protein belongs to the calreticulin family. In terms of processing, glycosylation is important for its biological activity. In terms of tissue distribution, expressed ubiquitously in every blastomere of the embryo up to the gastrulation stage. Expression becomes gradually restricted to the head and tail regions at the comma stage during embryogenesis. During postembryonic development, expressed prominently in the H-shaped excretory cell, in the neurons of head (including ASK and ADL) and tail (including PHA and PHB), in the dorsal and ventral nerve cords, and in the spermatheca. Expressed in the spicules of the male tail (at protein level).

It localises to the endoplasmic reticulum membrane. The protein localises to the cytoplasm. It is found in the perinuclear region. The protein resides in the cytoplasmic vesicle. Functionally, calcium-binding protein that interacts with newly synthesized monoglucosylated glycoproteins in the endoplasmic reticulum. It may act in assisting protein assembly and/or in the retention within the ER of unassembled protein subunits. It seems to play a major role in the quality control apparatus of the ER by the retention of incorrectly folded proteins. Required for embryogenesis and larval development under heat and ER stress conditions. May be important for germ cell development. Involved in neuronal necrotic cell death. This is Calnexin (cnx-1) from Caenorhabditis elegans.